The sequence spans 270 residues: 4-diphosphocytidyl-2-C-methyl-D-erythritol kinase (270 aa).

The active site involves K8. ATP is bound at residue 90–100 (PIGAGLGGGSS). D132 is an active-site residue.

It belongs to the GHMP kinase family. IspE subfamily.

It carries out the reaction 4-CDP-2-C-methyl-D-erythritol + ATP = 4-CDP-2-C-methyl-D-erythritol 2-phosphate + ADP + H(+). The protein operates within isoprenoid biosynthesis; isopentenyl diphosphate biosynthesis via DXP pathway; isopentenyl diphosphate from 1-deoxy-D-xylulose 5-phosphate: step 3/6. In terms of biological role, catalyzes the phosphorylation of the position 2 hydroxy group of 4-diphosphocytidyl-2C-methyl-D-erythritol. This is 4-diphosphocytidyl-2-C-methyl-D-erythritol kinase from Cytophaga hutchinsonii (strain ATCC 33406 / DSM 1761 / CIP 103989 / NBRC 15051 / NCIMB 9469 / D465).